A 100-amino-acid polypeptide reads, in one-letter code: Urease subunit gamma (100 aa).

The protein belongs to the urease gamma subunit family. Heterotrimer of UreA (gamma), UreB (beta) and UreC (alpha) subunits. Three heterotrimers associate to form the active enzyme.

The protein localises to the cytoplasm. The enzyme catalyses urea + 2 H2O + H(+) = hydrogencarbonate + 2 NH4(+). The protein operates within nitrogen metabolism; urea degradation; CO(2) and NH(3) from urea (urease route): step 1/1. This is Urease subunit gamma from Arthrobacter sp. (strain FB24).